A 346-amino-acid polypeptide reads, in one-letter code: Dihydroorotase (346 aa).

Zn(2+) contacts are provided by H13 and H15. Residues 15 to 17 and N41 contribute to the substrate site; that span reads HLR. The Zn(2+) site is built by K99, H136, and H174. At K99 the chain carries N6-carboxylysine. Substrate is bound at residue H136. Substrate is bound at residue L219. Position 247 (D247) interacts with Zn(2+). D247 is a catalytic residue. Substrate is bound by residues H251 and A263.

It belongs to the metallo-dependent hydrolases superfamily. DHOase family. Class II DHOase subfamily. As to quaternary structure, homodimer. It depends on Zn(2+) as a cofactor.

It carries out the reaction (S)-dihydroorotate + H2O = N-carbamoyl-L-aspartate + H(+). The protein operates within pyrimidine metabolism; UMP biosynthesis via de novo pathway; (S)-dihydroorotate from bicarbonate: step 3/3. In terms of biological role, catalyzes the reversible cyclization of carbamoyl aspartate to dihydroorotate. The sequence is that of Dihydroorotase from Chelativorans sp. (strain BNC1).